The sequence spans 842 residues: 9-beta-pimara-7,15-diene synthase, chloroplastic (842 aa).

Residues 1–56 (MASPMEAVARSSLVLAPRRRRALGLLPAAAAAAPFVLDCRRRHNGGMRRPHVSFAC) constitute a chloroplast transit peptide. Mg(2+) contacts are provided by Asp-591, Asp-595, Asn-735, Ser-739, and Glu-743. The DDXXD motif motif lies at 591-595 (DDFFD).

This sequence belongs to the terpene synthase family. It depends on Mg(2+) as a cofactor. In terms of tissue distribution, expressed in roots.

It localises to the plastid. It is found in the chloroplast. It catalyses the reaction 9alpha-copalyl diphosphate = 9beta-pimara-7,15-diene + diphosphate. In terms of biological role, involved in the biosynthesis of momilactone A and B phytoalexins. Catalyzes the conversion of syn-copalyl diphosphate to the phytoalexin precursor syn-pimara-7,15-diene. The sequence is that of 9-beta-pimara-7,15-diene synthase, chloroplastic from Oryza sativa subsp. japonica (Rice).